A 201-amino-acid polypeptide reads, in one-letter code: Small ribosomal subunit protein uS4c (201 aa).

Positions 89–152 (MRLDNILFRL…NSRTLVQNLL (64 aa)) constitute an S4 RNA-binding domain.

It belongs to the universal ribosomal protein uS4 family. In terms of assembly, part of the 30S ribosomal subunit. Contacts protein S5. The interaction surface between S4 and S5 is involved in control of translational fidelity.

The protein resides in the plastid. Its subcellular location is the chloroplast. Its function is as follows. One of the primary rRNA binding proteins, it binds directly to 16S rRNA where it nucleates assembly of the body of the 30S subunit. Functionally, with S5 and S12 plays an important role in translational accuracy. In Olimarabidopsis pumila (Dwarf rocket), this protein is Small ribosomal subunit protein uS4c (rps4).